The primary structure comprises 98 residues: Large ribosomal subunit protein uL23 (98 aa).

It belongs to the universal ribosomal protein uL23 family. As to quaternary structure, part of the 50S ribosomal subunit. Contacts protein L29, and trigger factor when it is bound to the ribosome.

Functionally, one of the early assembly proteins it binds 23S rRNA. One of the proteins that surrounds the polypeptide exit tunnel on the outside of the ribosome. Forms the main docking site for trigger factor binding to the ribosome. The protein is Large ribosomal subunit protein uL23 of Methylobacterium nodulans (strain LMG 21967 / CNCM I-2342 / ORS 2060).